We begin with the raw amino-acid sequence, 598 residues long: NADH-quinone oxidoreductase subunit C/D (598 aa).

Residues 1-189 are NADH dehydrogenase I subunit C; that stretch reads MTDLTTSDSL…DPYVLTKQKE (189 aa). The interval 213–598 is NADH dehydrogenase I subunit D; the sequence is DFMFLNLGPN…IDFVMSDVDR (386 aa).

It in the N-terminal section; belongs to the complex I 30 kDa subunit family. The protein in the C-terminal section; belongs to the complex I 49 kDa subunit family. As to quaternary structure, NDH-1 is composed of 13 different subunits. Subunits NuoB, CD, E, F, and G constitute the peripheral sector of the complex.

The protein localises to the cell inner membrane. It catalyses the reaction a quinone + NADH + 5 H(+)(in) = a quinol + NAD(+) + 4 H(+)(out). Its function is as follows. NDH-1 shuttles electrons from NADH, via FMN and iron-sulfur (Fe-S) centers, to quinones in the respiratory chain. The immediate electron acceptor for the enzyme in this species is believed to be ubiquinone. Couples the redox reaction to proton translocation (for every two electrons transferred, four hydrogen ions are translocated across the cytoplasmic membrane), and thus conserves the redox energy in a proton gradient. This Yersinia pseudotuberculosis serotype O:1b (strain IP 31758) protein is NADH-quinone oxidoreductase subunit C/D.